Reading from the N-terminus, the 114-residue chain is uncharacterized protein (114 aa).

The HIT domain maps to 6-114; it reads IFSKIIRREI…GGRPFSWPPG (109 aa). A Histidine triad motif motif is present at residues 98-102; that stretch reads HLHLH.

This is an uncharacterized protein from Synechocystis sp. (strain ATCC 27184 / PCC 6803 / Kazusa).